We begin with the raw amino-acid sequence, 368 residues long: Trans-enoyl reductase thnE (368 aa).

53–56 (VDVK) contributes to the NADP(+) binding site. 140–147 (LATATAAY) serves as a coordination point for substrate. Residues 179 to 182 (STAT), 202 to 205 (SPSN), Tyr-220, and 267 to 268 (VE) each bind NADP(+). 289–293 (VMTVW) serves as a coordination point for substrate. 358–359 (PS) provides a ligand contact to NADP(+).

Belongs to the zinc-containing alcohol dehydrogenase family. Monomer.

The enzyme catalyses malate + 6 malonyl-CoA + acetyl-CoA + 2 AH2 + 2 S-adenosyl-L-methionine + 5 NADPH + 9 H(+) = trihazone A + 2 A + 2 S-adenosyl-L-homocysteine + 6 CO2 + 5 NADP(+) + 7 CoA + 6 H2O. Its pathway is secondary metabolite biosynthesis. In terms of biological role, trans-enoyl reductase; part of the gene cluster that produces the tetronate natural products trihazones. The PKS-NRPS synthetase thnA with the help of the trans-enoyl reductase thnE are responsible for the synthesis of the carboxylmethyl containing trihazone A. The PKS portion of thnA synthesizes beta-keto-triene chain from one acetyl-CoA and 6 equivalents of malonyl-CoA, in collaboration with thnE, which selectively reduces the enoyl intermediate during the first and fourth iteration of the PKS. The NRPS domain selects and activates malate, of which the alpha-hydroxyl group attacks the completed polyketide acyl-S-ACP chain to form the ester product. Intramolecular Dieckmann cyclization catalyzed by the terminal reductase domain releases the product as trihazone A from the PKS-NPRS. The pathway begins with the formation of trihazone A by the hybrid PKS-NRPS synthetase thnA and the trans-enoyl reductase thnE. Trihazone A is further decarboxylated by the 2-oxoglutarate-dependent dioxygenase thnC to produce trihazone D. The function of the FAD-dependent monooxygenase thnD has still to be identified. The chain is Trans-enoyl reductase thnE from Trichoderma harzianum (Hypocrea lixii).